A 23-amino-acid chain; its full sequence is Dahlein-4.1 (23 aa).

In terms of tissue distribution, expressed by the skin dorsal glands.

It is found in the secreted. Has no antimicrobial activity. The polypeptide is Dahlein-4.1 (Ranoidea dahlii (Dahl's aquatic frog)).